A 422-amino-acid polypeptide reads, in one-letter code: Ameloblastin (422 aa).

The signal sequence occupies residues 1-26 (MSASKIPLFKMKGLLLFLSLVKMSLA). Pro-42 bears the Hydroxyproline mark. Ser-48 carries the post-translational modification Phosphoserine. Ser-117 carries O-linked (GalNAc...) serine glycosylation. The interval 271 to 321 (GLNQNSPKGGDFTVEVDSPVSVTKGPEKGEGPEGSPLQEASPDKGENPALL) is disordered.

The protein belongs to the ameloblastin family. In terms of tissue distribution, ameloblast-specific.

It localises to the secreted. Its subcellular location is the extracellular space. The protein resides in the extracellular matrix. Its function is as follows. Involved in the mineralization and structural organization of enamel. The sequence is that of Ameloblastin (Ambn) from Rattus norvegicus (Rat).